The primary structure comprises 73 residues: UPF0154 protein PEPE_0872 (73 aa).

A helical membrane pass occupies residues 5 to 25 (IWIMIVIIALLVGAVGGFFFA).

This sequence belongs to the UPF0154 family.

Its subcellular location is the cell membrane. The chain is UPF0154 protein PEPE_0872 from Pediococcus pentosaceus (strain ATCC 25745 / CCUG 21536 / LMG 10740 / 183-1w).